We begin with the raw amino-acid sequence, 344 residues long: MASQTPNLECRMYEAKYPEVDMAVMIQVKNIADMGAYVSLLEYNNIEGMILFSELSRRRIRSVSSLIKVGRIEPVMVLRVDKEKGYIDLSKRRVSEEDIQTCEERYNKSKLVHSIMRHVAETLSIDLEDLYVNIGWPLYRRHGHAFEAFKILVTDPDSVLGPLTREIKEVGPDGQEVTKVVPAVTEEVKDALVKNIRRRMTPQPMKIRADIELKCFQFDGVVHIKEAMKNAEAAGNEDCPVKIKLVAPPLYVLTTQTLDKEQGIEILNKAIAACTETIETHKGKLVVKEGARAVSERDEKMLTEHMAKLRLDNEEMSGDEDSGDEEEDTGMGEVDLDAGAGIIE.

The region spanning Asp-21–Arg-92 is the S1 motif domain. Ser-56 carries the phosphoserine; by GCN2 modification. Residues Asp-312–Glu-344 form a disordered region. Positions Glu-314–Leu-336 are enriched in acidic residues.

Belongs to the eIF-2-alpha family. As to quaternary structure, heterotrimer composed of an alpha, a beta and a gamma chain. In terms of processing, phosphorylated at Ser-56 by GCN2.

Functionally, functions in the early steps of protein synthesis by forming a ternary complex with GTP and initiator tRNA. This complex binds to a 40S ribosomal subunit, followed by mRNA binding to form a 43S pre-initiation complex. Junction of the 60S ribosomal subunit to form the 80S initiation complex is preceded by hydrolysis of the GTP bound to eIF-2 and release of an eIF-2-GDP binary complex. In order for eIF-2 to recycle and catalyze another round of initiation, the GDP bound to eIF-2 must exchange with GTP by way of a reaction catalyzed by eIF-2B. The protein is Eukaryotic translation initiation factor 2 subunit alpha homolog of Arabidopsis thaliana (Mouse-ear cress).